A 172-amino-acid chain; its full sequence is Nascent polypeptide-associated complex subunit beta (172 aa).

2 disordered regions span residues 36 to 58 and 142 to 172; these read KTGK…GDDK and QNMQ…DKVE. Over residues 41-50 the composition is skewed to basic residues; that stretch reads TPRRKMKRAP. In terms of domain architecture, NAC-A/B spans 54 to 119; it reads GGDDKKLQQT…GEDKELTELV (66 aa).

It belongs to the NAC-beta family. As to quaternary structure, part of the nascent polypeptide-associated complex (NAC), consisting of EGD2 and EGD1. NAC associates with ribosomes via EGD1.

It localises to the cytoplasm. It is found in the nucleus. Functionally, component of the nascent polypeptide-associated complex (NAC), a dynamic component of the ribosomal exit tunnel, protecting the emerging polypeptides from interaction with other cytoplasmic proteins to ensure appropriate nascent protein targeting. The NAC complex also promotes mitochondrial protein import by enhancing productive ribosome interactions with the outer mitochondrial membrane and blocks the inappropriate interaction of ribosomes translating non-secretory nascent polypeptides with translocation sites in the membrane of the endoplasmic reticulum. EGD1 may act as a transcription factor that exert a negative effect on the expression of several genes that are transcribed by RNA polymerase II. In Pyricularia oryzae (strain 70-15 / ATCC MYA-4617 / FGSC 8958) (Rice blast fungus), this protein is Nascent polypeptide-associated complex subunit beta (EGD1).